Consider the following 181-residue polypeptide: Large ribosomal subunit protein uL5 (181 aa).

This sequence belongs to the universal ribosomal protein uL5 family. Part of the 50S ribosomal subunit; part of the 5S rRNA/L5/L18/L25 subcomplex. Contacts the 5S rRNA and the P site tRNA. Forms a bridge to the 30S subunit in the 70S ribosome.

In terms of biological role, this is one of the proteins that bind and probably mediate the attachment of the 5S RNA into the large ribosomal subunit, where it forms part of the central protuberance. In the 70S ribosome it contacts protein S13 of the 30S subunit (bridge B1b), connecting the 2 subunits; this bridge is implicated in subunit movement. Contacts the P site tRNA; the 5S rRNA and some of its associated proteins might help stabilize positioning of ribosome-bound tRNAs. The protein is Large ribosomal subunit protein uL5 of Helicobacter pylori (strain P12).